Here is a 106-residue protein sequence, read N- to C-terminus: MSELLINDYTRKGFVDGLCLRLPTICIRPGKPNKATSSFVSSIIREPLHGETSICPVAEKMAFSFIKFLGKKKEEWALAITGYVVSIPIVLPILIIFIKAILDLGK.

A helical membrane pass occupies residues 78-98 (LAITGYVVSIPIVLPILIIFI).

It is found in the membrane. This is an uncharacterized protein from Haemophilus influenzae (strain ATCC 51907 / DSM 11121 / KW20 / Rd).